The sequence spans 147 residues: Holdfast attachment protein A (147 aa).

Involved in attachment of the holdfast to the cell. The holdfast is a structure that allows the bacteria to firmly adheres to surfaces. The polypeptide is Holdfast attachment protein A (hfaA) (Caulobacter vibrioides (strain ATCC 19089 / CIP 103742 / CB 15) (Caulobacter crescentus)).